Consider the following 529-residue polypeptide: MHSVLAQAASGALSFELRLGQSSVLTICILALLTFVLREIVLYFTRHSMPPGPFRWPLIGNALQLPQDHPWVKYTEWAKMYGPLMQLDVLGQHMLVITSAQTARDLMEKRSSIYSDRPHLVMAGDLAGFGDTLILQNYGEEFRYQRKLVSHSFSPSVIHRYYDLQEAAARRLVLAIIEDPDSLENSTRLHIASIILRMTYGYTVKGVDDPLFTTGIAVINGFSEATRPGAWPVDFVPILQYVPHWVPGFVFTRKAREWRGVLERAMWAPYHWCKENYARDAAHGLCLCGSILAAEGSQLSSDQEWLFVNAAVTVMGGGLDTNISTILSFVLAMLRFPEVQKKAQAEIDAVIGPNRLPLISDRHSLPYVRSVVTEVYRWIPAVPLGIPHALRQDDHYDGLFLSKGSVVVPNVWGMLHDPSIYPAPHEFKPERYGGLDAEMTKVTDIAFGFGRRACPGFYFAEGTIFAIVATVLAICDVVPTVDEHGQEVIPEVSLTSGAIVSPENVKCAFRPRSGRVKDILVEAVETEQE.

Residues 24-44 (VLTICILALLTFVLREIVLYF) form a helical membrane-spanning segment. Asparagine 185 and asparagine 322 each carry an N-linked (GlcNAc...) asparagine glycan. Cysteine 454 contacts heme.

The protein belongs to the cytochrome P450 family. The cofactor is heme.

The protein localises to the membrane. The protein operates within secondary metabolite biosynthesis. In terms of biological role, cytochrome P450 monooxygenase that is able to use trans-stilbene as a substrate for oxidation. The protein is Cytochrome P450 monooxygenase 45 of Postia placenta (strain ATCC 44394 / Madison 698-R) (Brown rot fungus).